We begin with the raw amino-acid sequence, 640 residues long: 1-deoxy-D-xylulose-5-phosphate synthase (640 aa).

Thiamine diphosphate is bound by residues H75 and 117–119 (GHA). D146 provides a ligand contact to Mg(2+). Residues 147 to 148 (AA), N175, and E370 contribute to the thiamine diphosphate site. N175 serves as a coordination point for Mg(2+).

It belongs to the transketolase family. DXPS subfamily. In terms of assembly, homodimer. Mg(2+) is required as a cofactor. Requires thiamine diphosphate as cofactor.

It catalyses the reaction D-glyceraldehyde 3-phosphate + pyruvate + H(+) = 1-deoxy-D-xylulose 5-phosphate + CO2. It participates in metabolic intermediate biosynthesis; 1-deoxy-D-xylulose 5-phosphate biosynthesis; 1-deoxy-D-xylulose 5-phosphate from D-glyceraldehyde 3-phosphate and pyruvate: step 1/1. Catalyzes the acyloin condensation reaction between C atoms 2 and 3 of pyruvate and glyceraldehyde 3-phosphate to yield 1-deoxy-D-xylulose-5-phosphate (DXP). This is 1-deoxy-D-xylulose-5-phosphate synthase from Chlamydia trachomatis serovar D (strain ATCC VR-885 / DSM 19411 / UW-3/Cx).